The sequence spans 660 residues: Phosphatidylinositol-binding clathrin assembly protein (660 aa).

Ser2 is modified (N-acetylserine). Residues 14-145 (QHSVTGSAVS…VSYRQVAFDF (132 aa)) enclose the ENTH domain. Phosphoserine occurs at positions 16 and 20. Residues 221–294 (KYFDMKKNQC…LEGKKIKDST (74 aa)) are interaction with PIMREG. A Glycyl lysine isopeptide (Lys-Gly) (interchain with G-Cter in SUMO2) cross-link involves residue Lys238. Phosphoserine is present on residues Ser303 and Ser315. Over residues 556-566 (GTTKNDVSWSQ) the composition is skewed to polar residues. A disordered region spans residues 556-580 (GTTKNDVSWSQPGEKKLTGGSNWQP).

The protein belongs to the PICALM/SNAP91 family. As to quaternary structure, binds to clathrin; involves primarily the C-terminal sequences, but the full-length protein is required for full binding capacity. Binds phosphatidylinositol 4,5- bisphosphate. Interacts with PIMREG; this interaction may change the subcellular location into the nucleus. Interacts with AP2A1 (via its alpha-appendage domain). Interacts (via N-terminus) with VAMP2; VAMP3; VAMP7 and VAMP8 (Via N-terminus). Interacts with LC3/MAP1LC3A. Skins and livers of 1-week-old mice.

The protein localises to the cell membrane. The protein resides in the membrane. It localises to the clathrin-coated pit. Its subcellular location is the golgi apparatus. It is found in the cytoplasmic vesicle. The protein localises to the clathrin-coated vesicle. The protein resides in the nucleus. Functionally, cytoplasmic adapter protein that plays a critical role in clathrin-mediated endocytosis which is important in processes such as internalization of cell receptors, synaptic transmission or removal of apoptotic cells. Recruits AP-2 and attaches clathrin triskelions to the cytoplasmic side of plasma membrane leading to clathrin-coated vesicles (CCVs) assembly. Furthermore, regulates clathrin-coated vesicle size and maturation by directly sensing and driving membrane curvature. In addition to binding to clathrin, mediates the endocytosis of small R-SNARES (Soluble NSF Attachment Protein REceptors) between plasma membranes and endosomes including VAMP2, VAMP3, VAMP4, VAMP7 or VAMP8. In turn, PICALM-dependent SNARE endocytosis is required for the formation and maturation of autophagic precursors. Modulates thereby autophagy and the turnover of autophagy substrates such as MAPT/TAU or amyloid precursor protein cleaved C-terminal fragment (APP-CTF). This Mus musculus (Mouse) protein is Phosphatidylinositol-binding clathrin assembly protein (Picalm).